Here is a 1832-residue protein sequence, read N- to C-terminus: Zinc finger SWIM domain-containing protein 8 (1832 aa).

Residues Ser36, Ser48, and Ser53 each carry the phosphoserine modification. The tract at residues Arg45–Arg67 is disordered. The span at Thr55 to Gly65 shows a compositional bias: gly residues. The SWIM-type zinc finger occupies Tyr172–Ile208. Residues Ser437 and Ser564 each carry the phosphoserine modification. Disordered stretches follow at residues Pro516–Glu722, Asn800–Ser821, and Ser1018–Val1216. The span at Leu563 to Leu572 shows a compositional bias: basic and acidic residues. The span at His1021 to Ser1042 shows a compositional bias: polar residues. Residues Ser1121–Ser1132 are compositionally biased toward gly residues. A Phosphothreonine modification is found at Thr1141. Positions Ile1146–Leu1161 are enriched in polar residues. Ser1155, Ser1158, and Ser1162 each carry phosphoserine. The segment covering Gly1176–Ala1211 has biased composition (low complexity). At Ser1270 the chain carries Phosphoserine. The span at Ser1435–Gly1446 shows a compositional bias: polar residues. The segment at Ser1435–Ala1465 is disordered. Residues Ala1455 to Ala1465 are compositionally biased toward gly residues. A Phosphoserine modification is found at Ser1831.

This sequence belongs to the ZSWIM8 family. In terms of assembly, component of the SCF-like E3 ubiquitin-protein ligase complex which contains CUL3, RBX1, ELOB, ELOC and ZSWIM8. Interacts with DAB1.

It localises to the cytoplasm. It is found in the cytosol. The protein operates within protein modification; protein ubiquitination. In terms of biological role, substrate recognition component of a SCF-like E3 ubiquitin-protein ligase complex that promotes target-directed microRNA degradation (TDMD), a process that mediates degradation of microRNAs (miRNAs). The SCF-like E3 ubiquitin-protein ligase complex acts by catalyzing ubiquitination and subsequent degradation of AGO proteins (AGO1, AGO2, AGO3 and/or AGO4), thereby exposing miRNAs for degradation. Specifically recognizes and binds AGO proteins when they are engaged with a TDMD target. May also acts as a regulator of axon guidance: specifically recognizes misfolded ROBO3 and promotes its ubiquitination and subsequent degradation. Plays an essential role for proper embryonic development of heart and lung. Controls protein quality of DAB1, a key signal molecule for brain development, thus protecting its signaling strength. Mechanistically, recognizes intrinsically disordered regions of DAB1 and eliminates misfolded DAB1 that cannot be properly phosphorylated. In Mus musculus (Mouse), this protein is Zinc finger SWIM domain-containing protein 8.